Consider the following 135-residue polypeptide: Small ribosomal subunit protein uS9 (135 aa).

The protein belongs to the universal ribosomal protein uS9 family.

This Archaeoglobus fulgidus (strain ATCC 49558 / DSM 4304 / JCM 9628 / NBRC 100126 / VC-16) protein is Small ribosomal subunit protein uS9 (rps9).